Consider the following 104-residue polypeptide: MAGQQGIYCAPDNIVPNRDRVDVGCAPDGAMQLWVMEYEVTGIGKGCAMCKAINPQQAEMLLKSNGIYNGSSYLYKVTRIEQVIVPPCNGLMAEQVVTYKDVVS.

Cys25 and Cys88 are oxidised to a cystine.

In terms of assembly, homodimer; disulfide-linked. Interacts with the major capsid protein.

The protein localises to the virion. The sequence is that of Portal vertex auxiliary protein from Bacteroides intestinalis (Bacteroides phage PhiCrAss001).